We begin with the raw amino-acid sequence, 352 residues long: DNA polymerase IV (352 aa).

The 181-residue stretch at 6–186 (IIHIDMDAFY…LPLGKIPGAG (181 aa)) folds into the UmuC domain. The Mg(2+) site is built by aspartate 10 and aspartate 104. The active site involves glutamate 105.

Belongs to the DNA polymerase type-Y family. In terms of assembly, monomer. Mg(2+) is required as a cofactor.

The protein resides in the cytoplasm. It carries out the reaction DNA(n) + a 2'-deoxyribonucleoside 5'-triphosphate = DNA(n+1) + diphosphate. In terms of biological role, poorly processive, error-prone DNA polymerase involved in untargeted mutagenesis. Copies undamaged DNA at stalled replication forks, which arise in vivo from mismatched or misaligned primer ends. These misaligned primers can be extended by PolIV. Exhibits no 3'-5' exonuclease (proofreading) activity. May be involved in translesional synthesis, in conjunction with the beta clamp from PolIII. This is DNA polymerase IV from Neisseria gonorrhoeae (strain ATCC 700825 / FA 1090).